Here is a 150-residue protein sequence, read N- to C-terminus: Transcriptional repressor NrdR (150 aa).

A zinc finger lies at 3–34 (CPFCAFADSKVVDSRPDKGGSTIRRRRECESC). An ATP-cone domain is found at 49–139 (PLVIKKDGRR…VYRSFKDITE (91 aa)).

It belongs to the NrdR family. Zn(2+) serves as cofactor.

Its function is as follows. Negatively regulates transcription of bacterial ribonucleotide reductase nrd genes and operons by binding to NrdR-boxes. The chain is Transcriptional repressor NrdR from Geotalea uraniireducens (strain Rf4) (Geobacter uraniireducens).